The chain runs to 219 residues: Orotate phosphoribosyltransferase (219 aa).

Lys-26 contacts 5-phospho-alpha-D-ribose 1-diphosphate. 34–35 (FF) lines the orotate pocket. Residues 72-73 (YK), Arg-98, Lys-99, Lys-102, His-104, and 124-132 (DDVITAGTA) each bind 5-phospho-alpha-D-ribose 1-diphosphate. Orotate contacts are provided by Thr-128 and Arg-156.

It belongs to the purine/pyrimidine phosphoribosyltransferase family. PyrE subfamily. In terms of assembly, homodimer. It depends on Mg(2+) as a cofactor.

The catalysed reaction is orotidine 5'-phosphate + diphosphate = orotate + 5-phospho-alpha-D-ribose 1-diphosphate. The protein operates within pyrimidine metabolism; UMP biosynthesis via de novo pathway; UMP from orotate: step 1/2. Its function is as follows. Catalyzes the transfer of a ribosyl phosphate group from 5-phosphoribose 1-diphosphate to orotate, leading to the formation of orotidine monophosphate (OMP). The sequence is that of Orotate phosphoribosyltransferase from Stenotrophomonas maltophilia (strain R551-3).